The primary structure comprises 668 residues: Tyrosine-protein phosphatase non-receptor type ptp-2 (668 aa).

SH2 domains are found at residues N10 to V113 and W134 to L232. Residues I264–Y580 enclose the Tyrosine-protein phosphatase domain. C518 functions as the Phosphocysteine intermediate in the catalytic mechanism. The disordered stretch occupies residues P603–K668. 2 stretches are compositionally biased toward low complexity: residues S616–T634 and S652–K668.

Belongs to the protein-tyrosine phosphatase family. Non-receptor class 2 subfamily. Expressed in embryonic cells, developing vulva, body wall muscles, head neurons and gonadal sheath cells.

The protein localises to the cytoplasm. The catalysed reaction is O-phospho-L-tyrosyl-[protein] + H2O = L-tyrosyl-[protein] + phosphate. In terms of biological role, involved in embryonic and larval development. Plays a role in oogenesis by regulating mpk-1 phosphorylation and oocyte maturation in response to major sperm protein (MSP). During the formation of neuromuscular junctions at the larval stage, negatively regulates membrane protrusion from body wall muscles probably downstream of receptor egl-15. Plays a role in fluid homeostasis probably downstream of receptor egl-15 and adapter soc-1. Promotes vulva induction and negatively regulates fertility probably downstream of receptor let-23. Negatively regulates daf-2-mediated repression of dauer formation. The sequence is that of Tyrosine-protein phosphatase non-receptor type ptp-2 from Caenorhabditis elegans.